The following is a 212-amino-acid chain: Large ribosomal subunit protein uL1 (212 aa).

It belongs to the universal ribosomal protein uL1 family. As to quaternary structure, part of the 50S ribosomal subunit.

Its function is as follows. Binds directly to 23S rRNA. Probably involved in E site tRNA release. Functionally, protein L1 is also a translational repressor protein, it controls the translation of its operon by binding to its mRNA. This is Large ribosomal subunit protein uL1 from Halobacterium salinarum (strain ATCC 29341 / DSM 671 / R1).